The chain runs to 205 residues: Ribosomal RNA large subunit methyltransferase E (205 aa).

S-adenosyl-L-methionine-binding residues include G60, W62, D80, D96, and D121. K161 (proton acceptor) is an active-site residue.

The protein belongs to the class I-like SAM-binding methyltransferase superfamily. RNA methyltransferase RlmE family.

Its subcellular location is the cytoplasm. It carries out the reaction uridine(2552) in 23S rRNA + S-adenosyl-L-methionine = 2'-O-methyluridine(2552) in 23S rRNA + S-adenosyl-L-homocysteine + H(+). Specifically methylates the uridine in position 2552 of 23S rRNA at the 2'-O position of the ribose in the fully assembled 50S ribosomal subunit. The sequence is that of Ribosomal RNA large subunit methyltransferase E from Azoarcus sp. (strain BH72).